Reading from the N-terminus, the 700-residue chain is Elongation factor G (700 aa).

Residues 13–288 (SKIRNIGITA…AVIDYLPAPD (276 aa)) enclose the tr-type G domain. GTP contacts are provided by residues 22–29 (AHIDAGKT), 86–90 (DTPGH), and 140–143 (NKLD).

Belongs to the TRAFAC class translation factor GTPase superfamily. Classic translation factor GTPase family. EF-G/EF-2 subfamily.

The protein localises to the cytoplasm. Catalyzes the GTP-dependent ribosomal translocation step during translation elongation. During this step, the ribosome changes from the pre-translocational (PRE) to the post-translocational (POST) state as the newly formed A-site-bound peptidyl-tRNA and P-site-bound deacylated tRNA move to the P and E sites, respectively. Catalyzes the coordinated movement of the two tRNA molecules, the mRNA and conformational changes in the ribosome. In Gluconobacter oxydans (strain 621H) (Gluconobacter suboxydans), this protein is Elongation factor G.